Consider the following 1164-residue polypeptide: Phytochrome D (1164 aa).

The interval 1–55 (MVSGGGSKTSGGEAASSGHRRSRHTSAAEQAQSSANKALRSQNQQPQNHGGGTES) is disordered. The segment covering 25 to 55 (TSAAEQAQSSANKALRSQNQQPQNHGGGTES) has biased composition (polar residues). Positions 255-437 (DIKLLCDTVV…AFGLQLNMEL (183 aa)) constitute a GAF domain. Phytochromobilin is bound at residue Cys-360. PAS domains lie at 656-727 (VARE…LKGD) and 790-861 (DYKA…MIVL). The Histidine kinase domain occupies 938 to 1157 (YIFQVIKNPL…LIVIELPVPL (220 aa)).

Belongs to the phytochrome family. Homodimer. Contains one covalently linked phytochromobilin chromophore.

In terms of biological role, regulatory photoreceptor which exists in two forms that are reversibly interconvertible by light: the Pr form that absorbs maximally in the red region of the spectrum and the Pfr form that absorbs maximally in the far-red region. Photoconversion of Pr to Pfr induces an array of morphogenic responses, whereas reconversion of Pfr to Pr cancels the induction of those responses. Pfr controls the expression of a number of nuclear genes including those encoding the small subunit of ribulose-bisphosphate carboxylase, chlorophyll A/B binding protein, protochlorophyllide reductase, rRNA, etc. It also controls the expression of its own gene(s) in a negative feedback fashion. This chain is Phytochrome D (PHYD), found in Arabidopsis thaliana (Mouse-ear cress).